Consider the following 1608-residue polypeptide: MAPRSSKGKSNNKGKGGDKKKRDDKLLAPSLVEITVTTPYETQVILKGVSTDKIIDVRRLLASHVETCHFTNYSLSHKVKGHKLNDNIQVLSLKPCFLRMIPEEYLEESQALTQVRRVIDIVACTTRFFSKSPNKSIVAGNANPTPAPDGLDMVAIHTTPKLSQFYEFFSIHHLSPPILHLKKVDGEEAGEKRDGDYFGLKVKICNGKVIHVIASVKGFFAVGKQLSHCHSIVDLLQNVSNAFAKAYESLMKAFTDRNKFGNLPFGLRSNTWLVPSPVSESASPLPTEDEHWGGNGGGQGRNGEYDHRPWAAEFSVLATLPCKTEEERVIRDKKAFLLHSQFIDTSVQRAVRAICNVMDTNQQTSGTTDLPAGSILLEDHVGDLSIVVKRDIASLDSKPEATFQNDAFVLSSEELAERNLLKGITADESVIVHDTPALGKVIVRQCGYTAVVNVKGQTQKAMSDFRDILIDDLPDGGANALNLNSLRVEFHRPHSVGTSVENQPTQLDWDDLESYRCIIQELVKINLTKLEETRVSSVRPIRWELGSTWVQHLQKKETDVCGKPATNDETELSVKGLGKQFKDLKSKSKKSENISAVNEKDTRLHELNEEDDLGQKSIDGLFTELKELLSEEAFSRLKETGTGLHLKSKEELTNMAYGYYDEIALPRLVADFGSLELSPVDGRTLTDFMHIRGLQMRSLGHVAKLAEKLPHIQSLCIHEMITRAFKHLLRAVIASVNNMAELPVAVAASLNFMLGRRELEGCDRIPGEEYCLRLQWLQKFLSRKFGWIQKDEFHHLKKFSILRGLCQKVGLELVSRDFDFDSPNPFMSSDIIGLVPVCKHVLCISSDGRTLLESSKLALDKGKLDDAVSYGTKALVKMIAVCGPYHRNTACAYSLLAVVLYHTGDFNQATIYQQKALDINERELGLDHPDTMKSYGDLSVFYYRLQHFELALKYVNRALFLLHFTCGLSHPNTAATYINVAMMEKEVGNDHLALRYLHEALKSNKRLLGADHIQTAASYHAIAVALSFMEAHSLSVQHEQTTLQILTAKLGADDLRTQDAAAWLEYFESRAIEQQEAGRNGIPKPDASIASKGHLSVSDLLDYISSDPDTKGNVAHRKHRRARILQVNDKVASADDDAHRVASQIDIVTWNNVAEADVTKSRSEVNDPDTVVDKTNIETGDIVVHRLNVDRQTVEESTLDEGWQEAYSKGRSGNGAGRKSRQRQPDLMKKRMLLNKHHNRNQDVQQQNIYSPLQKTSKGPSLSKSSPRRALKNAEIDVSTNTTKPQLKASGAAAVTSTTLASKSLSYKEVALAPPGTVLKPMLEKLELNLERTETQIYRTSSASSGEESKSDTVMLDLPIEGTELHCEKQESQESAESVENLTSESEGDLGSYRGKKTSDISRTKLSASAEPYNPGGFLVIDLQSSAATIGSYPIMVADPISWAVVSCGIHSPPYYSAIHSNGVGTPRSMNPDAPEFVPRRSLQNSSQHAGEDASVSVDSSSCLKAEKDAVDLKKRELASFIVKSSQKEVPAALSKTSPEAESGGTSEKDSAVTEIVYSREEENGANANETNGGEGFVIVAKKRRRKNKVRLTNVAAGLYHQPSSVCA.

Residues 1-12 (MAPRSSKGKSNN) are compositionally biased toward basic residues. Disordered stretches follow at residues 1–22 (MAPR…KKKR) and 278–303 (VSES…GRNG). The region spanning 288 to 564 (EDEHWGGNGG…KKETDVCGKP (277 aa)) is the Clu domain. TPR repeat units follow at residues 848 to 881 (GRTL…MIAV), 890 to 923 (ACAY…NERE), 932 to 965 (MKSY…LHFT), and 974 to 1007 (AATY…NKRL). Disordered regions lie at residues 1194–1226 (VEES…RQPD), 1238–1292 (HNRN…ASGA), 1369–1400 (KQES…KTSD), 1466–1499 (TPRS…VSVD), and 1531–1552 (PAAL…KDSA). A Nuclear localization signal motif is present at residues 1217-1224 (GRKSRQRQ). Polar residues-rich tracts occupy residues 1242–1265 (QDVQ…LSKS) and 1373–1385 (QESA…LTSE). Polar residues predominate over residues 1535–1546 (SKTSPEAESGGT).

It localises to the nucleus. The protein localises to the cytoplasm. The protein resides in the cytosol. Its function is as follows. May act as the scaffold of a protein complex, which sequesters key factors that are required for the G2 to M transition in meristematic tissues. Together with REC2, REC3 and FMT/CLU, contributes to the establishment of the cellular volume devoted to the chloroplast compartment. In Arabidopsis thaliana (Mouse-ear cress), this protein is Protein REDUCED CHLOROPLAST COVERAGE 3.